The sequence spans 115 residues: Divalent-cation tolerance protein CutA (115 aa).

Residues Cys19, His86, and His87 each contribute to the Cu cation site.

Belongs to the CutA family. In terms of assembly, homotrimer. The cofactor is Cu cation.

The protein localises to the cytoplasm. Its function is as follows. Involved in resistance toward heavy metals. The protein is Divalent-cation tolerance protein CutA of Citrobacter koseri (strain ATCC BAA-895 / CDC 4225-83 / SGSC4696).